The primary structure comprises 1365 residues: MGTSSHGLATNSSGAKVAERDGFQDVPAPGEGAAGRICGAQPVPFVPQVLGVMIGAGVAVVVTAVLILLVVRRLRVPKTPAPDGPRYRFRKRDKVLFYGRKIMRKVSQSTSSLVDTSVSATSRPRMKKKLKMLNIAKKILRIQKETPTLQRKEPPPAVLEADLTEGDLANSHLPSEVLYMFKNVRVLGHFEKPLFLELCRHMVFQRLGQGDYVFRPGQPDASIYVVQDGLLELCLPGPDGKECVVKEVVPGDSVNSLLSILDVITGHQHPQRTVSARAARDSTVLRLPVEAFSAVFAKYPESLVRVVQIIMVRLQRVTFLALHNYLGLTNELFSHEIQPLRLFPSPGLPTRTSPVRGSKRMVSTSATDEPRETPGRPPDPTGAPLPGPTGDPVKPTSLETPSAPLLSRCVSMPGDISGLQGGPRSDFDMAYERGRISVSLQEGASGGSLAAPARTPTQEPREQPAGACEYSYCEDESATGGCPFGPYQGRQTSSIFEAAKRELAKLMRIEDPSLLNSRVLLHHAKAGTIIARQGDQDVSLHFVLWGCLHVYQHMIDKAEDVCLFVAQPGELVGQLAVLTGEPLIFTLRAQRDCTFLRISKSDFYEIMRAQPSVVLSAAHTVAARMSPFVRQMDFAIDWTAVEAGRALYRQGDRSDCTYIVLNGRLRSVIQRGSGKKELVGEYGRGDLIGVVEALTRQPRATTVHAVRDTELAKLPEGTLGHIKRRHPQVVTRLIHLLSQKILGNLQQLQGPFPGSGLGVPPHSELTNPASNLATVAVLPVCAEVPMVAFTLELQHALQAIGPTLLLNSDIIRARLGASALDSIQEFRLSGWLAQQEDAHRIVLYQTDASLTPWTVRCLRQADCILIVGLGDQEPTLGQLEQMLENTAVRALKQLVLLHREEGAGPTRTVEWLNMRSWCSGHPHLRCPRRLFSRRSPAKLHELYEKVFSRRADRHSDFSRLARVLTGNTIALVLGGGGARGCSHIGVLKALEEAGVPVDLVGGTSIGSFIGALYAEERSASRTKQRAREWAKSMTSVLEPVLDLTYPVTSMFTGSAFNRSIHRVFQDKQIEDLWLPYFNVTTDITASAMRVHKDGSLWRYVRASMTLSGYLPPLCDPKDGHLLMDGGYINNLPADIARSMGAKTVIAIDVGSQDETDLSTYGDSLSGWWLLWKRLNPWADKVKVPDMAEIQSRLAYVSCVRQLEVVKSSSYCEYLRPPIDCFKTMDFGKFDQVYDVGYQYGKAVFGGWSRGNVIEKMLTDRRSTDLNESRRADVLAYPSSGFTDLAEIVSRIEPPTSYVSDGCADGEESDCLTEYEEDAGPDCSRDEGGSPEGASPSTASEMEEEKSILRQRRCLPQEPPGSATDA.

The Lumenal portion of the chain corresponds to 1–50; it reads MGTSSHGLATNSSGAKVAERDGFQDVPAPGEGAAGRICGAQPVPFVPQVL. Asparagine 11 carries an N-linked (GlcNAc...) asparagine glycan. Residues 51-71 form a helical membrane-spanning segment; the sequence is GVMIGAGVAVVVTAVLILLVV. At 72 to 1365 the chain is on the cytoplasmic side; it reads RRLRVPKTPA…QEPPGSATDA (1294 aa). 186–313 is a binding site for a nucleoside 3',5'-cyclic phosphate; it reads VLGHFEKPLF…VRVVQIIMVR (128 aa). Disordered stretches follow at residues 343–427 and 441–463; these read FPSP…RSDF and QEGASGGSLAAPARTPTQEPREQ. A Phosphoserine modification is found at serine 345. A compositionally biased stretch (polar residues) spans 350-367; that stretch reads TRTSPVRGSKRMVSTSAT. Threonine 352 carries the phosphothreonine modification. Phosphoserine is present on residues serine 353 and serine 363. Pro residues predominate over residues 375 to 389; it reads GRPPDPTGAPLPGPT. Serine 411 is subject to Phosphoserine. Residue threonine 455 is modified to Phosphothreonine. A nucleoside 3',5'-cyclic phosphate-binding positions include 502–624 and 620–740; these read ELAK…VAAR and TVAA…LSQK. The PNPLA domain maps to 971–1137; that stretch reads LVLGGGGARG…INNLPADIAR (167 aa). The GXGXXG motif lies at 975 to 980; it reads GGGARG. A GXSXG motif is present at residues 1002–1006; sequence GTSIG. The active-site Nucleophile is the serine 1004. Aspartate 1124 (proton acceptor) is an active-site residue. The DGA/G signature appears at 1124–1126; it reads DGG. The tract at residues 1296–1365 is disordered; sequence SYVSDGCADG…QEPPGSATDA (70 aa). Acidic residues predominate over residues 1303–1319; it reads ADGEESDCLTEYEEDAG.

Belongs to the NTE family. Post-translationally, glycosylated.

Its subcellular location is the endoplasmic reticulum membrane. The catalysed reaction is a 1-acyl-sn-glycero-3-phosphocholine + H2O = sn-glycerol 3-phosphocholine + a fatty acid + H(+). It carries out the reaction 1-hexadecanoyl-sn-glycero-3-phosphocholine + H2O = sn-glycerol 3-phosphocholine + hexadecanoate + H(+). The enzyme catalyses 1-(9Z-octadecenoyl)-sn-glycero-3-phosphocholine + H2O = sn-glycerol 3-phosphocholine + (9Z)-octadecenoate + H(+). It catalyses the reaction 1-hexadecanoylglycerol + H2O = glycerol + hexadecanoate + H(+). The catalysed reaction is 2-hexadecanoylglycerol + H2O = glycerol + hexadecanoate + H(+). It carries out the reaction 1-(9Z-octadecenoyl)-glycerol + H2O = glycerol + (9Z)-octadecenoate + H(+). The enzyme catalyses 2-(9Z-octadecenoyl)-glycerol + H2O = glycerol + (9Z)-octadecenoate + H(+). It catalyses the reaction 2-(5Z,8Z,11Z,14Z-eicosatetraenoyl)-glycerol + H2O = glycerol + (5Z,8Z,11Z,14Z)-eicosatetraenoate + H(+). The catalysed reaction is 1-hexadecanoyl-sn-glycero-3-phosphate + H2O = sn-glycerol 3-phosphate + hexadecanoate + H(+). Its activity is regulated as follows. Inhibited by a series a OPs such as mipafox (MPX), phenyl saligenin phosphate (PSP), phenyl dipentyl phosphinate (PDPP), diisopropyl fluorophosphate and paraoxon. Functionally, phospholipase B that deacylates intracellular phosphatidylcholine (PtdCho), generating glycerophosphocholine (GroPtdCho). This deacylation occurs at both sn-2 and sn-1 positions of PtdCho. Catalyzes the hydrolysis of several naturally occurring membrane-associated lipids. Hydrolyzes lysophospholipids and monoacylglycerols, preferring the 1-acyl to the 2-acyl isomer. Does not catalyze hydrolysis of di- or triacylglycerols or fatty acid amides. This Pongo abelii (Sumatran orangutan) protein is Patatin-like phospholipase domain-containing protein 6 (PNPLA6).